Reading from the N-terminus, the 154-residue chain is Ribonuclease H (154 aa).

Positions 1-142 (MTKQVEIFTD…CDELARQGAN (142 aa)) constitute an RNase H type-1 domain. Asp10, Glu48, Asp70, and Asp134 together coordinate Mg(2+).

Belongs to the RNase H family. Monomer. Mg(2+) serves as cofactor.

The protein localises to the cytoplasm. It catalyses the reaction Endonucleolytic cleavage to 5'-phosphomonoester.. Functionally, endonuclease that specifically degrades the RNA of RNA-DNA hybrids. This is Ribonuclease H from Yersinia pestis bv. Antiqua (strain Antiqua).